The primary structure comprises 362 residues: Cobalt-precorrin-5B C(1)-methyltransferase (362 aa).

Belongs to the CbiD family.

The catalysed reaction is Co-precorrin-5B + S-adenosyl-L-methionine = Co-precorrin-6A + S-adenosyl-L-homocysteine. It participates in cofactor biosynthesis; adenosylcobalamin biosynthesis; cob(II)yrinate a,c-diamide from sirohydrochlorin (anaerobic route): step 6/10. Its function is as follows. Catalyzes the methylation of C-1 in cobalt-precorrin-5B to form cobalt-precorrin-6A. The polypeptide is Cobalt-precorrin-5B C(1)-methyltransferase (Burkholderia multivorans (strain ATCC 17616 / 249)).